A 326-amino-acid chain; its full sequence is MNCLIAIALSVSFFLVGIVGPIQAQLQMNFYANSCPNAEKIVQDFVSNHVSNAPSLAAALIRMHFHDCFVRGCDGSVLINSTSGNAERDATPNLTVRGFGFIDAIKSVLEAQCPGIVSCADIIALASRDAVVFTGGPNWSVPTGRRDGRISNAAEALANIPPPTSNITNLQTLFANQGLDLKDLVLLSGAHTIGVSHCSSFTNRLYNFTGRGGQDPALDSEYAANLKSRKCPSLNDNKTIVEMDPGSRKTFDLSYYQLVLKRRGLFQSDSALTTNPTTLSNINRILTGSVGSFFSEFAKSMEKMGRINVKTGSAGVVRRQCSVANS.

A signal peptide spans 1–24; sequence MNCLIAIALSVSFFLVGIVGPIQA. 4 cysteine pairs are disulfide-bonded: Cys-35–Cys-113, Cys-68–Cys-73, Cys-119–Cys-321, and Cys-198–Cys-231. His-66 (proton acceptor) is an active-site residue. Ca(2+)-binding residues include Asp-67, Val-70, Gly-72, Asp-74, and Ser-76. Asn-80 and Asn-138 each carry an N-linked (GlcNAc...) asparagine glycan. Pro-161 lines the substrate pocket. The N-linked (GlcNAc...) asparagine glycan is linked to Asn-166. Residue His-191 participates in heme b binding. A Ca(2+)-binding site is contributed by Thr-192. N-linked (GlcNAc...) asparagine glycans are attached at residues Asn-207 and Asn-237. Residues Asp-244, Ser-247, and Asp-252 each contribute to the Ca(2+) site.

The protein belongs to the peroxidase family. Classical plant (class III) peroxidase subfamily. Heme b is required as a cofactor. Ca(2+) serves as cofactor. Expressed in root cells.

The protein localises to the secreted. The catalysed reaction is 2 a phenolic donor + H2O2 = 2 a phenolic radical donor + 2 H2O. In terms of biological role, removal of H(2)O(2), oxidation of toxic reductants, biosynthesis and degradation of lignin, suberization, auxin catabolism, response to environmental stresses such as wounding, pathogen attack and oxidative stress. These functions might be dependent on each isozyme/isoform in each plant tissue. The polypeptide is Peroxidase 3 (PER3) (Arabidopsis thaliana (Mouse-ear cress)).